The primary structure comprises 430 residues: Histidine--tRNA ligase (430 aa).

The protein belongs to the class-II aminoacyl-tRNA synthetase family. Homodimer.

The protein localises to the cytoplasm. It catalyses the reaction tRNA(His) + L-histidine + ATP = L-histidyl-tRNA(His) + AMP + diphosphate + H(+). The protein is Histidine--tRNA ligase of Lactococcus lactis subsp. lactis (strain IL1403) (Streptococcus lactis).